The primary structure comprises 320 residues: Glutaminase (320 aa).

Residues serine 70, asparagine 121, glutamate 165, asparagine 172, tyrosine 196, tyrosine 248, and valine 266 each contribute to the substrate site.

Belongs to the glutaminase family. As to quaternary structure, homotetramer.

It carries out the reaction L-glutamine + H2O = L-glutamate + NH4(+). This is Glutaminase from Mycobacterium marinum (strain ATCC BAA-535 / M).